Reading from the N-terminus, the 425-residue chain is MIDLRLLREDPDRVRASQRARGEDVALVDSLLSADERRRSSGVRFDELRAEQKGLGKLIGKAAGDEKAELLKRAEQLKTDVKAADAERDAADAETQELLQRLGNLVHPDVPVGGEEDFVTLETHGTHRDFAAEGFEPRDHLELGQLLGAIDVERGAKVSGSRFYFLTGVGALLELALVNAAIAQATAAGFTPMLTPALVRPQSMAGTGFLGQAAQDVYHLDKDDLYLVGTSEVPLAAYHMDEILDGDRLPLRYAGFSPCFRREAGSHGKDTRGIFRVHQFDKVEMFSYVLPEDSQAEHQRLLEWEKQWLTSLELPFRVIDVASADLGSSAARKYDCEAWIPTQGKYRELTSTSDCTEFQSRRLSIRVREGKKVRPLATLNGTLCAVPRTIVAILENHQQADGSVRVPEVLRPYLGGREVLEPVAK.

230 to 232 (TSE) serves as a coordination point for L-serine. ATP contacts are provided by residues 261–263 (RRE) and V277. E284 is an L-serine binding site. Residue 348–351 (ELTS) participates in ATP binding. T382 contacts L-serine.

Belongs to the class-II aminoacyl-tRNA synthetase family. Type-1 seryl-tRNA synthetase subfamily. Homodimer. The tRNA molecule binds across the dimer.

The protein localises to the cytoplasm. The enzyme catalyses tRNA(Ser) + L-serine + ATP = L-seryl-tRNA(Ser) + AMP + diphosphate + H(+). The catalysed reaction is tRNA(Sec) + L-serine + ATP = L-seryl-tRNA(Sec) + AMP + diphosphate + H(+). It participates in aminoacyl-tRNA biosynthesis; selenocysteinyl-tRNA(Sec) biosynthesis; L-seryl-tRNA(Sec) from L-serine and tRNA(Sec): step 1/1. Catalyzes the attachment of serine to tRNA(Ser). Is also able to aminoacylate tRNA(Sec) with serine, to form the misacylated tRNA L-seryl-tRNA(Sec), which will be further converted into selenocysteinyl-tRNA(Sec). This Streptomyces coelicolor (strain ATCC BAA-471 / A3(2) / M145) protein is Serine--tRNA ligase.